Here is a 498-residue protein sequence, read N- to C-terminus: Glycerol kinase (498 aa).

Residue Thr-12 coordinates ADP. Residues Thr-12, Thr-13, and Ser-14 each coordinate ATP. Thr-12 provides a ligand contact to sn-glycerol 3-phosphate. An ADP-binding site is contributed by Arg-16. Arg-82, Glu-83, and Tyr-134 together coordinate sn-glycerol 3-phosphate. Residues Arg-82, Glu-83, and Tyr-134 each contribute to the glycerol site. His-230 carries the post-translational modification Phosphohistidine; by HPr. Position 244 (Asp-244) interacts with sn-glycerol 3-phosphate. Glycerol-binding residues include Asp-244 and Gln-245. 5 residues coordinate ADP: Thr-266, Gly-309, Gln-313, Gly-410, and Asn-414. ATP-binding residues include Thr-266, Gly-309, Gln-313, and Gly-410.

It belongs to the FGGY kinase family. Homotetramer and homodimer (in equilibrium). The phosphoenolpyruvate-dependent sugar phosphotransferase system (PTS), including enzyme I, and histidine-containing protein (HPr) are required for the phosphorylation, which leads to the activation of the enzyme.

The enzyme catalyses glycerol + ATP = sn-glycerol 3-phosphate + ADP + H(+). The protein operates within polyol metabolism; glycerol degradation via glycerol kinase pathway; sn-glycerol 3-phosphate from glycerol: step 1/1. Activated by phosphorylation and inhibited by fructose 1,6-bisphosphate (FBP). Functionally, key enzyme in the regulation of glycerol uptake and metabolism. Catalyzes the phosphorylation of glycerol to yield sn-glycerol 3-phosphate. The polypeptide is Glycerol kinase (Staphylococcus aureus (strain COL)).